A 365-amino-acid chain; its full sequence is Phospho-N-acetylmuramoyl-pentapeptide-transferase (365 aa).

A run of 9 helical transmembrane segments spans residues L19–T39, A47–I67, A91–I111, F115–V135, L155–P175, G184–A204, A224–F244, A281–V301, and T344–S364.

It belongs to the glycosyltransferase 4 family. MraY subfamily. Requires Mg(2+) as cofactor.

The protein resides in the cell inner membrane. The enzyme catalyses UDP-N-acetyl-alpha-D-muramoyl-L-alanyl-gamma-D-glutamyl-meso-2,6-diaminopimeloyl-D-alanyl-D-alanine + di-trans,octa-cis-undecaprenyl phosphate = di-trans,octa-cis-undecaprenyl diphospho-N-acetyl-alpha-D-muramoyl-L-alanyl-D-glutamyl-meso-2,6-diaminopimeloyl-D-alanyl-D-alanine + UMP. It functions in the pathway cell wall biogenesis; peptidoglycan biosynthesis. Functionally, catalyzes the initial step of the lipid cycle reactions in the biosynthesis of the cell wall peptidoglycan: transfers peptidoglycan precursor phospho-MurNAc-pentapeptide from UDP-MurNAc-pentapeptide onto the lipid carrier undecaprenyl phosphate, yielding undecaprenyl-pyrophosphoryl-MurNAc-pentapeptide, known as lipid I. The chain is Phospho-N-acetylmuramoyl-pentapeptide-transferase from Gloeothece citriformis (strain PCC 7424) (Cyanothece sp. (strain PCC 7424)).